A 575-amino-acid polypeptide reads, in one-letter code: MTYRPLLNDLVDMAAGRAPVDLVVRNARIVDVFSQRIVEAPLAIGGGRFLGFFEAEAHATLDAEGRYLLPGLIDGHVHIESSLVSPAQFARLVLARGTTAVIADPHEIANVCGLAGLRYMLDATRDLPLDVRLALPSCVPATPFENAGAVLDAAALATLMDDPRVAGLGEMMNFPGVLAGDADVLDKIALALDRGKTVDGHSPGLAGRDLATYAAARIATDHECTTVDEMHERIALGMYVLLREGSAARDMARLAPGITPGNARRCVFCTDDRQPADILRDGHIDNHLRIAVSHGVDPVTAVTIATLNAAECFGLRDRGAVAPGRVADFVLVDDLTGFAVRKVYAAGRLVARDGAVVVDLPDHADPAVRDTVNIRPLDDTAFRLPLPTGLARVIGLQPHSLLTDALERDVPRDASGCFTPGDGLVKLAVVERHKATGNVGVGIIEGYGLRGGAVATTVAHDSHNIVVAGDNDADMLVAVRELERTGGGITLCAGGRVLASLPLPVAGLMSDRPATEVSATFAQMLSIAHETLHISRDIEPFMTLSFLTLPVIPALKLTDRGLFDVRTFSFTTVGV.

This sequence belongs to the metallo-dependent hydrolases superfamily. Adenine deaminase family. Requires Mn(2+) as cofactor.

The catalysed reaction is adenine + H2O + H(+) = hypoxanthine + NH4(+). The sequence is that of Adenine deaminase from Nitratidesulfovibrio vulgaris (strain ATCC 29579 / DSM 644 / CCUG 34227 / NCIMB 8303 / VKM B-1760 / Hildenborough) (Desulfovibrio vulgaris).